The sequence spans 348 residues: Lipoyl synthase, mitochondrial (348 aa).

The [4Fe-4S] cluster site is built by Cys-105, Cys-110, Cys-116, Cys-136, Cys-140, and Cys-143. The Radical SAM core domain occupies 121 to 341 (ETGTATATIM…RTXXLVSYVL (221 aa)).

Belongs to the radical SAM superfamily. Lipoyl synthase family. [4Fe-4S] cluster serves as cofactor.

It localises to the mitochondrion. It catalyses the reaction [[Fe-S] cluster scaffold protein carrying a second [4Fe-4S](2+) cluster] + N(6)-octanoyl-L-lysyl-[protein] + 2 oxidized [2Fe-2S]-[ferredoxin] + 2 S-adenosyl-L-methionine + 4 H(+) = [[Fe-S] cluster scaffold protein] + N(6)-[(R)-dihydrolipoyl]-L-lysyl-[protein] + 4 Fe(3+) + 2 hydrogen sulfide + 2 5'-deoxyadenosine + 2 L-methionine + 2 reduced [2Fe-2S]-[ferredoxin]. It participates in protein modification; protein lipoylation via endogenous pathway; protein N(6)-(lipoyl)lysine from octanoyl-[acyl-carrier-protein]: step 2/2. In terms of biological role, catalyzes the radical-mediated insertion of two sulfur atoms into the C-6 and C-8 positions of the octanoyl moiety bound to the lipoyl domains of lipoate-dependent enzymes, thereby converting the octanoylated domains into lipoylated derivatives. The protein is Lipoyl synthase, mitochondrial (LIP1) of Ricinus communis (Castor bean).